A 276-amino-acid polypeptide reads, in one-letter code: 2-dehydro-3-deoxyphosphooctonate aldolase (276 aa).

The protein belongs to the KdsA family.

Its subcellular location is the cytoplasm. It catalyses the reaction D-arabinose 5-phosphate + phosphoenolpyruvate + H2O = 3-deoxy-alpha-D-manno-2-octulosonate-8-phosphate + phosphate. The protein operates within carbohydrate biosynthesis; 3-deoxy-D-manno-octulosonate biosynthesis; 3-deoxy-D-manno-octulosonate from D-ribulose 5-phosphate: step 2/3. The polypeptide is 2-dehydro-3-deoxyphosphooctonate aldolase (Stenotrophomonas maltophilia (strain K279a)).